The following is a 167-amino-acid chain: Peptide deformylase (167 aa).

Fe cation-binding residues include Cys-91 and His-133. Glu-134 is a catalytic residue. His-137 contacts Fe cation.

The protein belongs to the polypeptide deformylase family. Requires Fe(2+) as cofactor.

It catalyses the reaction N-terminal N-formyl-L-methionyl-[peptide] + H2O = N-terminal L-methionyl-[peptide] + formate. Removes the formyl group from the N-terminal Met of newly synthesized proteins. Requires at least a dipeptide for an efficient rate of reaction. N-terminal L-methionine is a prerequisite for activity but the enzyme has broad specificity at other positions. In Tolumonas auensis (strain DSM 9187 / NBRC 110442 / TA 4), this protein is Peptide deformylase.